The following is a 76-amino-acid chain: ATP synthase peripheral stalk subunit F6, mitochondrial (76 aa).

An N6-acetyllysine mark is found at Lys9, Lys14, and Lys47. An N6-acetyllysine; alternate mark is found at Lys52 and Lys67. Lys52 and Lys67 each carry N6-succinyllysine; alternate. Position 73 is an N6-acetyllysine (Lys73). Phosphoserine is present on Ser76.

This sequence belongs to the eukaryotic ATPase subunit F6 family. As to quaternary structure, component of the ATP synthase complex composed at least of ATP5F1A/subunit alpha, ATP5F1B/subunit beta, ATP5MC1/subunit c (homooctomer), MT-ATP6/subunit a, MT-ATP8/subunit 8, ATP5ME/subunit e, ATP5MF/subunit f, ATP5MG/subunit g, ATP5MK/subunit k, ATP5MJ/subunit j, ATP5F1C/subunit gamma, ATP5F1D/subunit delta, ATP5F1E/subunit epsilon, ATP5PF/subunit F6, ATP5PB/subunit b, ATP5PD/subunit d, ATP5PO/subunit OSCP. ATP synthase complex consists of a soluble F(1) head domain (subunits alpha(3) and beta(3)) - the catalytic core - and a membrane F(0) domain - the membrane proton channel (subunits c, a, 8, e, f, g, k and j). These two domains are linked by a central stalk (subunits gamma, delta, and epsilon) rotating inside the F1 region and a stationary peripheral stalk (subunits F6, b, d, and OSCP).

The protein resides in the mitochondrion. It localises to the mitochondrion inner membrane. Subunit F6, of the mitochondrial membrane ATP synthase complex (F(1)F(0) ATP synthase or Complex V) that produces ATP from ADP in the presence of a proton gradient across the membrane which is generated by electron transport complexes of the respiratory chain. ATP synthase complex consist of a soluble F(1) head domain - the catalytic core - and a membrane F(1) domain - the membrane proton channel. These two domains are linked by a central stalk rotating inside the F(1) region and a stationary peripheral stalk. During catalysis, ATP synthesis in the catalytic domain of F(1) is coupled via a rotary mechanism of the central stalk subunits to proton translocation. In vivo, can only synthesize ATP although its ATP hydrolase activity can be activated artificially in vitro. Part of the complex F(0) domain. Part of the complex F(0) domain and the peripheric stalk, which acts as a stator to hold the catalytic alpha(3)beta(3) subcomplex and subunit a/ATP6 static relative to the rotary elements. This Sus scrofa (Pig) protein is ATP synthase peripheral stalk subunit F6, mitochondrial.